The chain runs to 504 residues: MSIKAEEISSIIKQQIENYHSELKVSDVGTVTYIGDGIARAHGLDNAMAGELLEFSNGVMGMAQNLETNDVGIIILGPYTEIREGDEVRRTGKIMEVPVGEALIGRVVNSLGQPVDGLGPIETTGTRPIEAVAPGVMQRQSVNEPLQTGIKAIDALVPIGRGQRELIIGDRQTGKTSVAIDTILNQADQDMICIYVAIGQKESTVRNAVETLRHHGALDYTIVVTAAASQPAPLLYLAPYAGVAMAEEFMYNGKHVLVVYDDLSKQAAAYRELSLLLRRPPGREAYPGDVFYLHSRLLERAAKLNDSLGGGSITALPFVETQAGDISAYIPTNVISITDGQIFLQSDLFFSGVRPAINAGLSVSRVGGSAQIKAMKTVAGTLRLDLAAYRELESFSQFGSDLDAATRAKLERGKRTVEVLKQDLHKPLKVEKQVLILYALVHKYLDDVPVHDVLRFESEMNTWFDHNHPELLEEIRTTKKLPDEAKLEAALKEFKNTFVPSEEK.

169–176 (GDRQTGKT) serves as a coordination point for ATP.

Belongs to the ATPase alpha/beta chains family. In terms of assembly, F-type ATPases have 2 components, CF(1) - the catalytic core - and CF(0) - the membrane proton channel. CF(1) has five subunits: alpha(3), beta(3), gamma(1), delta(1), epsilon(1). CF(0) has three main subunits: a(1), b(2) and c(9-12). The alpha and beta chains form an alternating ring which encloses part of the gamma chain. CF(1) is attached to CF(0) by a central stalk formed by the gamma and epsilon chains, while a peripheral stalk is formed by the delta and b chains.

It localises to the cell membrane. It carries out the reaction ATP + H2O + 4 H(+)(in) = ADP + phosphate + 5 H(+)(out). Its function is as follows. Produces ATP from ADP in the presence of a proton gradient across the membrane. The alpha chain is a regulatory subunit. This is ATP synthase subunit alpha 2 from Listeria monocytogenes serovar 1/2a (strain ATCC BAA-679 / EGD-e).